A 324-amino-acid polypeptide reads, in one-letter code: Olfactory receptor 5T17 (324 aa).

At 1-37 (MPRTPSYTNTKTTQVNNVTEITVFILLGFTDDVDMNI) the chain is on the extracellular side. Asparagine 17 carries N-linked (GlcNAc...) asparagine glycosylation. Residues 38–58 (FLFILFLAIYVVTLIGNLGLV) form a helical membrane-spanning segment. Over 59-66 (VLVIEDSR) the chain is Cytoplasmic. A helical transmembrane segment spans residues 67–87 (LHNPMYYFLTVLSSLDACFSS). Over 88 to 111 (VLTPKMLVNFLSKNKSISFAGCAT) the chain is Extracellular. Asparagine 101 carries N-linked (GlcNAc...) asparagine glycosylation. A disulfide bridge links cysteine 109 with cysteine 201. The helical transmembrane segment at 112-132 (QMLLFVTFGTTECFLLAAMAY) threads the bilayer. Topologically, residues 133-145 (DRYLAIYSPLLYA) are cytoplasmic. A helical membrane pass occupies residues 146–166 (VRMSPRVYVPLIIASYTGGIL). The Extracellular segment spans residues 167–208 (HATIHTVATFSLSFCGSNEIRHVFCDIPPLLALSCSDTHLNQ). The chain crosses the membrane as a helical span at residues 209–229 (LLLFYCAGSIELITILIVLVS). Topologically, residues 230–249 (YGFVLLAILKINSAEGRRKI) are cytoplasmic. Residues 250–270 (FSTCGAHLTGVSIFHGTILFM) traverse the membrane as a helical segment. The Extracellular segment spans residues 271–283 (YVRPSSNYTLEQD). Asparagine 277 carries N-linked (GlcNAc...) asparagine glycosylation. A helical membrane pass occupies residues 284-304 (MVVSTFYTIVIPMLNPIIYSL). The Cytoplasmic segment spans residues 305 to 324 (RNKDVKEAMRKLLKRKLVHE).

The protein belongs to the G-protein coupled receptor 1 family.

The protein resides in the cell membrane. Potential odorant receptor. In Mus musculus (Mouse), this protein is Olfactory receptor 5T17.